We begin with the raw amino-acid sequence, 179 residues long: Large ribosomal subunit protein uL5 (179 aa).

It belongs to the universal ribosomal protein uL5 family. As to quaternary structure, part of the 50S ribosomal subunit; part of the 5S rRNA/L5/L18/L25 subcomplex. Contacts the 5S rRNA and the P site tRNA. Forms a bridge to the 30S subunit in the 70S ribosome.

Its function is as follows. This is one of the proteins that bind and probably mediate the attachment of the 5S RNA into the large ribosomal subunit, where it forms part of the central protuberance. In the 70S ribosome it contacts protein S13 of the 30S subunit (bridge B1b), connecting the 2 subunits; this bridge is implicated in subunit movement. Contacts the P site tRNA; the 5S rRNA and some of its associated proteins might help stabilize positioning of ribosome-bound tRNAs. The sequence is that of Large ribosomal subunit protein uL5 from Rickettsia prowazekii (strain Madrid E).